Reading from the N-terminus, the 230-residue chain is UPF0173 metal-dependent hydrolase Rsph17029_0942 (230 aa).

Belongs to the UPF0173 family.

The sequence is that of UPF0173 metal-dependent hydrolase Rsph17029_0942 from Cereibacter sphaeroides (strain ATCC 17029 / ATH 2.4.9) (Rhodobacter sphaeroides).